We begin with the raw amino-acid sequence, 169 residues long: Positive control factor (169 aa).

A DNA-binding region (H-T-H motif) is located at residues 132–157 (YERIADLLGVKKSTVQTTIKRASLKM).

Functionally, positive regulatory protein that acts at the late promoter PL. This Bacillus subtilis (strain 168) protein is Positive control factor (xpf).